We begin with the raw amino-acid sequence, 396 residues long: MKILVLNSGSSSIKFKFFDNKIVKASGLVEKIGEQNSKVVLKNTLNNESFERELTINNHEEGLSIVNELFKESGILADLNALDGCGHRIVHGGRNLSEHCLVDDYVLKEIDRVSIFAPLHNPAHLAGIKTMIKAAPSVANAAIFDTAFHRTMPDFAYMYALPYDFYDKHNIRRYGFHGTSHAYVSSRAAKFLQKDQNELNVISAHLGNGASVCAIEKGKSMDTSMGFTPLEGLIMGTRCGDLDPAILPFVSHLKGLTIEEIDTLMNKKSGVYGICGYNDFRDIEREIEQGNDKARLALDMFCYRLVKYIGSYFAVLPKTDAIIFTGGIGENDSLVRQKVCERLAHLGIELDFELNKQRISGERMINHANSKLKVLVIPTDEELEIARITEELIGKN.

Residue Asn-7 participates in Mg(2+) binding. Lys-14 serves as a coordination point for ATP. Position 88 (Arg-88) interacts with substrate. Catalysis depends on Asp-145, which acts as the Proton donor/acceptor. Residues 205–209, 279–281, and 327–331 each bind ATP; these read HLGNG, DFR, and GIGEN. Glu-381 contributes to the Mg(2+) binding site.

This sequence belongs to the acetokinase family. As to quaternary structure, homodimer. The cofactor is Mg(2+). Mn(2+) is required as a cofactor.

The protein resides in the cytoplasm. The enzyme catalyses acetate + ATP = acetyl phosphate + ADP. It functions in the pathway metabolic intermediate biosynthesis; acetyl-CoA biosynthesis; acetyl-CoA from acetate: step 1/2. Its function is as follows. Catalyzes the formation of acetyl phosphate from acetate and ATP. Can also catalyze the reverse reaction. The sequence is that of Acetate kinase from Campylobacter jejuni (strain RM1221).